A 34-amino-acid polypeptide reads, in one-letter code: Tryptophanase operon leader peptide (34 aa).

This is Tryptophanase operon leader peptide (tnaL) from Proteus vulgaris.